The sequence spans 157 residues: Protein Smg (157 aa).

It belongs to the Smg family.

The chain is Protein Smg from Salmonella agona (strain SL483).